An 83-amino-acid polypeptide reads, in one-letter code: Neurotoxin LmNaTx3 (83 aa).

The N-terminal stretch at 1-21 (MQLKIQLLMLVLMIVLTDVYS) is a signal peptide. An LCN-type CS-alpha/beta domain is found at 22 to 83 (KDGFIVSKKN…NIAMKNKNYC (62 aa)). 4 cysteine pairs are disulfide-bonded: Cys32–Cys83, Cys36–Cys59, Cys45–Cys64, and Cys49–Cys66.

The protein belongs to the long (4 C-C) scorpion toxin superfamily. Sodium channel inhibitor family. Alpha subfamily. Expressed by the venom gland.

The protein resides in the secreted. Functionally, binds voltage-independently at site-3 of voltage-gated sodium channels (Nav) and inhibits the inactivation of the activated channels, thereby blocking neuronal transmission. The chain is Neurotoxin LmNaTx3 from Lychas mucronatus (Chinese swimming scorpion).